The chain runs to 546 residues: NAD(P)H-quinone oxidoreductase chain 4 (546 aa).

The next 14 helical transmembrane spans lie at 17–37 (VPWL…VPFI), 48–68 (WYAL…YLNG), 103–123 (LILL…PVSF), 127–147 (LFYF…AVQD), 149–169 (LLFF…LAIW), 181–201 (FILY…AMGF), 222–242 (GFQL…LPIV), 256–276 (TAPV…YALL), 290–310 (FAPL…LTSF), 327–347 (MGFV…GAML), 348–368 (QMIS…ATYD), 389–409 (FALW…SGFV), 430–450 (VVIC…LLSM), and 477–497 (VYII…PRLM).

This sequence belongs to the complex I subunit 4 family.

It localises to the cellular thylakoid membrane. It catalyses the reaction a plastoquinone + NADH + (n+1) H(+)(in) = a plastoquinol + NAD(+) + n H(+)(out). The enzyme catalyses a plastoquinone + NADPH + (n+1) H(+)(in) = a plastoquinol + NADP(+) + n H(+)(out). NDH-1 shuttles electrons from NAD(P)H, via FMN and iron-sulfur (Fe-S) centers, to quinones in the respiratory chain. The immediate electron acceptor for the enzyme in this species is believed to be plastoquinone. Couples the redox reaction to proton translocation (for every two electrons transferred, four hydrogen ions are translocated across the cytoplasmic membrane), and thus conserves the redox energy in a proton gradient. This Parasynechococcus marenigrum (strain WH8102) protein is NAD(P)H-quinone oxidoreductase chain 4.